A 144-amino-acid polypeptide reads, in one-letter code: MRLNTLSPAEGAKHAPKRLGRGIGSGLGKTGGRGHKGQNSRSGGGVRRGFEGGQMPLYRRLPKFGFTSRKAMITSEVRLSDLAKVEGDVVDLNTLKAANVIGIQIEFAKVILSGEVARPVTIRGLRVTKGARAAIEAAGGKIEE.

Residues Met-1–Gly-53 form a disordered region. The segment covering Arg-21 to Gly-31 has biased composition (gly residues).

This sequence belongs to the universal ribosomal protein uL15 family. Part of the 50S ribosomal subunit.

In terms of biological role, binds to the 23S rRNA. The sequence is that of Large ribosomal subunit protein uL15 from Pectobacterium atrosepticum (strain SCRI 1043 / ATCC BAA-672) (Erwinia carotovora subsp. atroseptica).